The sequence spans 145 residues: Large ribosomal subunit protein uL16 (145 aa).

This sequence belongs to the universal ribosomal protein uL16 family. Part of the 50S ribosomal subunit.

In terms of biological role, binds 23S rRNA and is also seen to make contacts with the A and possibly P site tRNAs. In Lachnospira eligens (strain ATCC 27750 / DSM 3376 / VPI C15-48 / C15-B4) (Eubacterium eligens), this protein is Large ribosomal subunit protein uL16.